The sequence spans 180 residues: Inner membrane-spanning protein YciB (180 aa).

Transmembrane regions (helical) follow at residues 4–24 (LLSE…GGGI), 25–45 (QHAT…CYVI), 49–69 (VSKL…ITLI), 76–96 (IKIK…MSGI), 118–138 (ITLS…NEVV), and 150–170 (FKVF…LPLL).

It belongs to the YciB family.

It is found in the cell inner membrane. Functionally, plays a role in cell envelope biogenesis, maintenance of cell envelope integrity and membrane homeostasis. The sequence is that of Inner membrane-spanning protein YciB from Rickettsia africae (strain ESF-5).